Here is a 797-residue protein sequence, read N- to C-terminus: Probable exo-1,4-beta-xylosidase xlnD (797 aa).

The signal sequence occupies residues Met-1–Gly-20. Asn-23, Asn-87, Asn-142, and Asn-237 each carry an N-linked (GlcNAc...) asparagine glycan. Asp-310 is an active-site residue. 11 N-linked (GlcNAc...) asparagine glycosylation sites follow: Asn-326, Asn-391, Asn-404, Asn-442, Asn-479, Asn-521, Asn-617, Asn-644, Asn-657, Asn-684, and Asn-706.

It belongs to the glycosyl hydrolase 3 family.

Its subcellular location is the secreted. It carries out the reaction Hydrolysis of (1-&gt;4)-beta-D-xylans, to remove successive D-xylose residues from the non-reducing termini.. It participates in glycan degradation; xylan degradation. In terms of biological role, xylan 1,4-beta-xylosidase involved in the hydrolysis of xylan, a major structural heterogeneous polysaccharide found in plant biomass representing the second most abundant polysaccharide in the biosphere, after cellulose. The protein is Probable exo-1,4-beta-xylosidase xlnD (xlnD) of Aspergillus flavus (strain ATCC 200026 / FGSC A1120 / IAM 13836 / NRRL 3357 / JCM 12722 / SRRC 167).